A 130-amino-acid chain; its full sequence is Guanyl-specific ribonuclease T1 (130 aa).

The first 26 residues, 1 to 26, serve as a signal peptide directing secretion; the sequence is MMYSKLLTLTTLLLPTALALPSLVER. Disulfide bonds link C28–C36 and C32–C129. H66 is an active-site residue. Catalysis depends on E84, which acts as the Proton acceptor. Catalysis depends on H118, which acts as the Proton donor.

This sequence belongs to the ribonuclease N1/T1 family. In terms of assembly, monomer.

The catalysed reaction is [RNA] containing guanosine + H2O = an [RNA fragment]-3'-guanosine-3'-phosphate + a 5'-hydroxy-ribonucleotide-3'-[RNA fragment].. The sequence is that of Guanyl-specific ribonuclease T1 (rntA) from Aspergillus oryzae (strain ATCC 42149 / RIB 40) (Yellow koji mold).